Reading from the N-terminus, the 298-residue chain is TLR adapter interacting with SLC15A4 on the lysosome (298 aa).

The pLxIS motif signature appears at 287–291 (SLHIS). S291 bears the Phosphoserine mark.

As to quaternary structure, interacts (via pLxIS motif) with IRF5; leading to IRF5 activation. Interacts with SLC15A4; leading to its recruitment to endolysosome. Post-translationally, the phosphorylated pLxIS motif constitutes an IRF5-binding motif, leading to recruitment of the transcription factor IRF5 to induce type-I interferons and other cytokines.

Its subcellular location is the lysosome membrane. The protein resides in the endosome membrane. The protein localises to the nucleus. It localises to the cytoplasm. Functionally, innate immune adapter that mediates the recruitment and activation of IRF5 downstream of endolysosomal toll-like receptors TLR7, TLR8 and TLR9. Following recruitment to endolysosome by SLC15A4 downstream of TLR7, TLR8 and TLR9, specifically recruits IRF5 transcription factor via its pLxIS motif, leading to IRF5 activation and subsequent expression of type I interferons. Plays a role in the regulation of endolysosomal pH in immune cells such as B-cells, dendritic cells and monocytes. The protein is TLR adapter interacting with SLC15A4 on the lysosome of Mus musculus (Mouse).